Reading from the N-terminus, the 521-residue chain is Glucomannan 4-beta-mannosyltransferase 1 (521 aa).

A helical membrane pass occupies residues 22–42 (VIVPLLRLAVAVCLTMSVLLF). Residue D123 is part of the active site. Residues D182 and D184 each coordinate substrate. D276 is a catalytic residue. 4 consecutive transmembrane segments (helical) span residues 355 to 375 (IIAHIVTFAFYCLIIPATIFV), 391 to 411 (IITLLNSVGTPRSFHLLFFWI), 471 to 491 (VTELGVAAFLFSCGWYDLAFG), and 495 to 515 (FFIYLFFQGAAFFIVGIGYVG).

Belongs to the glycosyltransferase 2 family. Plant cellulose synthase-like A subfamily.

The protein localises to the golgi apparatus membrane. It carries out the reaction GDP-mannose + (glucomannan)n = GDP + (glucomannan)n+1.. Functionally, possesses glucomannan synthase and mannan synthase activities in vitro. Mannan synthase consists of a 4-beta-mannosyltransferase activity on mannan using GDP-mannose. The beta-1,4-mannan product is the backbone for galactomannan synthesis by galactomannan galactosyltransferase. Galactomannan is a noncellulosic polysaccharides of plant cell wall. The polypeptide is Glucomannan 4-beta-mannosyltransferase 1 (Oryza sativa subsp. japonica (Rice)).